The primary structure comprises 310 residues: Cysteine synthase (310 aa).

Lys46 is modified (N6-(pyridoxal phosphate)lysine). Residues Asn76, 180-184, and Ser268 contribute to the pyridoxal 5'-phosphate site; that span reads GTGGT.

Belongs to the cysteine synthase/cystathionine beta-synthase family. Homodimer. Pyridoxal 5'-phosphate is required as a cofactor.

The catalysed reaction is O-acetyl-L-serine + hydrogen sulfide = L-cysteine + acetate. It participates in amino-acid biosynthesis; L-cysteine biosynthesis; L-cysteine from L-serine: step 2/2. This chain is Cysteine synthase (cysK), found in Staphylococcus epidermidis (strain ATCC 35984 / DSM 28319 / BCRC 17069 / CCUG 31568 / BM 3577 / RP62A).